The primary structure comprises 708 residues: Ubiquitin thioesterase ZRANB1 (708 aa).

Residues 3 to 33 (ERGIKWACEYCTYENWPSAIKCTMCRAQRPS) form a RanBP2-type 1 zinc finger. Residues Cys-10, Cys-13, Cys-24, and Cys-27 each contribute to the Zn(2+) site. Positions 38–73 (TEDPFKSGSSDVGRDWDPSSTEGGSSPLICPDSSAR) are disordered. 2 RanBP2-type zinc fingers span residues 84 to 113 (NANK…QRRT) and 149 to 178 (RTQH…PRPN). Zn(2+) is bound by residues Cys-90, Cys-93, Cys-104, Cys-107, Cys-155, Cys-158, Cys-169, and Cys-172. Residues 200 to 223 (RARWRGSCSSGNSQRRSPPTMKRD) are disordered. Positions 206–216 (SCSSGNSQRRS) are enriched in polar residues. ANK repeat units lie at residues 260-290 (KKTD…SGGD) and 313-340 (YTLV…QQAA). Residues 432-592 (LYALWNRTAG…RGHFSALVAM (161 aa)) form the OTU domain. Cys-443 serves as the catalytic Nucleophile. His-585 (proton acceptor) is an active-site residue.

The protein belongs to the peptidase C64 family. Interacts with TRAF6. Interacts with APC.

It localises to the cytoplasm. Its subcellular location is the nucleus. The enzyme catalyses Thiol-dependent hydrolysis of ester, thioester, amide, peptide and isopeptide bonds formed by the C-terminal Gly of ubiquitin (a 76-residue protein attached to proteins as an intracellular targeting signal).. Its function is as follows. Ubiquitin thioesterase, which specifically hydrolyzes 'Lys-29'-linked and 'Lys-33'-linked diubiquitin. Also cleaves 'Lys-63'-linked chains, but with 40-fold less efficiency compared to 'Lys-29'-linked ones. Positive regulator of the Wnt signaling pathway that deubiquitinates APC protein, a negative regulator of Wnt-mediated transcription. Acts as a regulator of autophagy by mediating deubiquitination of PIK3C3/VPS34, thereby promoting autophagosome maturation. Plays a role in the regulation of cell morphology and cytoskeletal organization. Required in the stress fiber dynamics and cell migration. The polypeptide is Ubiquitin thioesterase ZRANB1 (Bos taurus (Bovine)).